The primary structure comprises 1202 residues: Phospholipid-transporting ATPase 10 (1202 aa).

Over 1 to 73 (MAGPSRRRRR…STKYTVASFF (73 aa)) the chain is Cytoplasmic. A helical transmembrane segment spans residues 74-95 (PKSLFEQFRRVANFYFLVTGIL). Over 96 to 99 (SLTD) the chain is Extracellular. The helical transmembrane segment at 100 to 122 (LSPYGAVSALLPLALVISATMVK) threads the bilayer. Residues 123–305 (EGIEDWRRKQ…SRIERTMDKI (183 aa)) lie on the Cytoplasmic side of the membrane. Residues 306-327 (IYLMFGLVFLMSFVGSIIFGVE) traverse the membrane as a helical segment. Residues 328–364 (TREDKVKNGRTERWYLKPDDADIFFDPERAPMAAIYH) are Extracellular-facing. A helical membrane pass occupies residues 365–382 (FFTATMLYSYFIPISLYV). The Cytoplasmic segment spans residues 383–920 (SIEIVKVLQS…HGHWCYSRIA (538 aa)). D430 functions as the 4-aspartylphosphate intermediate in the catalytic mechanism. The Mg(2+) site is built by D865 and D869. A helical transmembrane segment spans residues 921–940 (SMICYFFYKNITFGVTVFLY). Topologically, residues 941-954 (EAYTSFSGQPAYND) are extracellular. The chain crosses the membrane as a helical span at residues 955 to 974 (WFLSLFNVFFSSLPVIALGV). Residues 975–1004 (FDQDVSARFCYKFPLLYQEGVQNILFSWKR) are Cytoplasmic-facing. Residues 1005 to 1027 (IIGWMFNGFISALAIFFLCKESL) form a helical membrane-spanning segment. Over 1028 to 1040 (KHQLFDPDGKTAG) the chain is Extracellular. Residues 1041 to 1063 (REILGGTMYTCVVWVVNLQMALS) traverse the membrane as a helical segment. The Cytoplasmic portion of the chain corresponds to 1064–1069 (ISYFTW). Residues 1070-1090 (VQHIVIWGSIAFWYIFLMIYG) traverse the membrane as a helical segment. Over 1091-1107 (AMTPSFSTDAYMVFLEA) the chain is Extracellular. Residues 1108-1132 (LAPAPSYWLTTLFVMIFALIPYFVY) form a helical membrane-spanning segment. At 1133-1202 (KSVQMRFFPK…DQIYKDLVGV (70 aa)) the chain is on the cytoplasmic side.

It belongs to the cation transport ATPase (P-type) (TC 3.A.3) family. Type IV subfamily.

The protein localises to the cell membrane. It catalyses the reaction ATP + H2O + phospholipidSide 1 = ADP + phosphate + phospholipidSide 2.. In terms of biological role, involved in transport of phospholipids. This chain is Phospholipid-transporting ATPase 10, found in Arabidopsis thaliana (Mouse-ear cress).